A 478-amino-acid chain; its full sequence is Proline--tRNA ligase (478 aa).

The protein belongs to the class-II aminoacyl-tRNA synthetase family. ProS type 3 subfamily. Homodimer.

Its subcellular location is the cytoplasm. The catalysed reaction is tRNA(Pro) + L-proline + ATP = L-prolyl-tRNA(Pro) + AMP + diphosphate. Catalyzes the attachment of proline to tRNA(Pro) in a two-step reaction: proline is first activated by ATP to form Pro-AMP and then transferred to the acceptor end of tRNA(Pro). In Methanoregula boonei (strain DSM 21154 / JCM 14090 / 6A8), this protein is Proline--tRNA ligase.